Consider the following 201-residue polypeptide: MGITSAMVKELRTKTGAGMMDCKEALTSSNGDFEKAIDYLRKKGMSAATKRSSKAAKEGTIASYIHMGGRIGVMVELNCETDFVAKTEDFKNTAKDIAMHVAASNPTYVNPDEIPEEALEREKEIYRSQALAEKKPEKIWDKIIEGKLNKYYEEVCLTKQKFIKNTDITIETLINNLIAKTGENVIIRRFARYQLGEELKK.

Positions 81-84 are involved in Mg(2+) ion dislocation from EF-Tu; it reads TDFV.

It belongs to the EF-Ts family.

The protein localises to the cytoplasm. Its function is as follows. Associates with the EF-Tu.GDP complex and induces the exchange of GDP to GTP. It remains bound to the aminoacyl-tRNA.EF-Tu.GTP complex up to the GTP hydrolysis stage on the ribosome. The chain is Elongation factor Ts from Syntrophus aciditrophicus (strain SB).